Consider the following 186-residue polypeptide: Ribosome-recycling factor (186 aa).

This sequence belongs to the RRF family.

It localises to the cytoplasm. Its function is as follows. Responsible for the release of ribosomes from messenger RNA at the termination of protein biosynthesis. May increase the efficiency of translation by recycling ribosomes from one round of translation to another. In Leptothrix cholodnii (strain ATCC 51168 / LMG 8142 / SP-6) (Leptothrix discophora (strain SP-6)), this protein is Ribosome-recycling factor.